We begin with the raw amino-acid sequence, 425 residues long: Kynurenine/alpha-aminoadipate aminotransferase, mitochondrial (425 aa).

The N-terminal 29 residues, Met-1–Gly-29, are a transit peptide targeting the mitochondrion. Residue Arg-20 coordinates substrate. N6-acetyllysine is present on Lys-69. Substrate-binding residues include Tyr-74 and Tyr-142. Lys-179 is modified (N6-acetyllysine). The interval Glu-181 to Leu-208 is disordered. Polar residues predominate over residues Pro-198–Leu-208. Asn-202 contacts substrate. N6-(pyridoxal phosphate)lysine; alternate is present on Lys-263. An N6-acetyllysine; alternate mark is found at Lys-263, Lys-339, and Lys-367. N6-succinyllysine; alternate is present on residues Lys-263, Lys-339, and Lys-367. Arg-399 lines the substrate pocket. Lys-422 is subject to N6-acetyllysine.

Belongs to the class-I pyridoxal-phosphate-dependent aminotransferase family. As to quaternary structure, homodimer. The cofactor is pyridoxal 5'-phosphate. As to expression, higher expression in the liver. Also found in heart, brain, kidney, pancreas, prostate, testis and ovary.

Its subcellular location is the mitochondrion. It catalyses the reaction glycine + 2-oxoglutarate = glyoxylate + L-glutamate. The catalysed reaction is L-kynurenine + 2-oxoglutarate = kynurenate + L-glutamate + H2O. The enzyme catalyses L-kynurenine + glyoxylate = kynurenate + glycine + H2O. It carries out the reaction 3-hydroxy-L-kynurenine + glyoxylate = xanthurenate + glycine + H2O. It catalyses the reaction 2-oxohexanoate + L-kynurenine = L-2-aminohexanoate + kynurenate + H2O. The catalysed reaction is 3-phenylpyruvate + L-kynurenine = kynurenate + L-phenylalanine + H2O. The enzyme catalyses 4-methylsulfanyl-2-oxobutanoate + L-kynurenine = kynurenate + L-methionine + H2O. It carries out the reaction 2-oxo-3-sulfanylpropanoate + L-kynurenine = kynurenate + L-cysteine + H2O. It catalyses the reaction indole-3-pyruvate + L-kynurenine = kynurenate + L-tryptophan + H2O. The catalysed reaction is 2-oxopentanoate + L-kynurenine = L-2-aminopentanoate + kynurenate + H2O. The enzyme catalyses 4-methyl-2-oxopentanoate + L-kynurenine = kynurenate + L-leucine + H2O. It carries out the reaction L-2-aminoadipate + 2-oxoglutarate = 2-oxoadipate + L-glutamate. It catalyses the reaction glyoxylate + L-methionine = 4-methylsulfanyl-2-oxobutanoate + glycine. The catalysed reaction is L-2-aminoadipate + glyoxylate = 2-oxoadipate + glycine. The enzyme catalyses L-tyrosine + glyoxylate = 3-(4-hydroxyphenyl)pyruvate + glycine. It carries out the reaction glyoxylate + L-phenylalanine = 3-phenylpyruvate + glycine. It catalyses the reaction L-tryptophan + glyoxylate = indole-3-pyruvate + glycine. The catalysed reaction is L-leucine + glyoxylate = 4-methyl-2-oxopentanoate + glycine. The enzyme catalyses 2-oxobutanoate + L-kynurenine = (2S)-2-aminobutanoate + kynurenate + H2O. It carries out the reaction 2-oxoadipate + L-kynurenine = L-2-aminoadipate + kynurenate + H2O. It participates in amino-acid degradation; L-lysine degradation via saccharopine pathway; glutaryl-CoA from L-lysine: step 4/6. With respect to regulation, kynurenine transaminase activity is competitively inhibited by aminoadipate, asparagine, glutamate, histidine, cysteine, lysine, 3-hydroxy-kynurenine and phenylalanine. In terms of biological role, transaminase with broad substrate specificity. Has transaminase activity towards aminoadipate, kynurenine, methionine and glutamate. Shows activity also towards tryptophan, aspartate and hydroxykynurenine. Accepts a variety of oxo-acids as amino-group acceptors, with a preference for 2-oxoglutarate, 2-oxocaproic acid, phenylpyruvate and alpha-oxo-gamma-methiol butyric acid. Can also use glyoxylate as amino-group acceptor (in vitro). This Homo sapiens (Human) protein is Kynurenine/alpha-aminoadipate aminotransferase, mitochondrial.